A 542-amino-acid polypeptide reads, in one-letter code: Phosphoacetylglucosamine mutase (542 aa).

At methionine 1 the chain carries N-acetylmethionine. Threonine 62 is subject to Phosphothreonine. Serine 64 acts as the Phosphoserine intermediate in catalysis. Mg(2+)-binding residues include serine 64, aspartate 276, aspartate 278, and aspartate 280. Serine 64 is modified (phosphoserine). Substrate is bound by residues 370–372 (EAN), 496–500 (RPSGT), and arginine 505.

Belongs to the phosphohexose mutase family. It depends on Mg(2+) as a cofactor. In terms of tissue distribution, found in many tissues except lung. Relatively high expression in pancreas, heart, liver, and placenta, and relatively low expression in brain, skeletal muscle and kidney.

The catalysed reaction is N-acetyl-alpha-D-glucosamine 1-phosphate = N-acetyl-D-glucosamine 6-phosphate. Its pathway is nucleotide-sugar biosynthesis; UDP-N-acetyl-alpha-D-glucosamine biosynthesis; N-acetyl-alpha-D-glucosamine 1-phosphate from alpha-D-glucosamine 6-phosphate (route I): step 2/2. Catalyzes the conversion of GlcNAc-6-P into GlcNAc-1-P during the synthesis of uridine diphosphate/UDP-GlcNAc, a sugar nucleotide critical to multiple glycosylation pathways including protein N- and O-glycosylation. The chain is Phosphoacetylglucosamine mutase from Homo sapiens (Human).